A 598-amino-acid chain; its full sequence is DNA polymerase alpha subunit B (598 aa).

Polar residues predominate over residues 112 to 140; the sequence is SYTTPSKGSQKRAISTPETPLTKRSVSTR. Residues 112-167 form a disordered region; it reads SYTTPSKGSQKRAISTPETPLTKRSVSTRSPHQLLSPSSFSPSATPSQKYNSRSNR. Ser-126 is modified (phosphoserine). A phosphothreonine mark is found at Thr-127 and Thr-130. Residues Ser-141, Ser-147, Ser-152, and Ser-154 each carry the phosphoserine modification. Low complexity predominate over residues 141-158; sequence SPHQLLSPSSFSPSATPS.

This sequence belongs to the DNA polymerase alpha subunit B family. Component of the alpha DNA polymerase complex (also known as the alpha DNA polymerase-primase complex) consisting of four subunits: the catalytic subunit POLA1, the regulatory subunit POLA2, and primase complex subunits PRIM1 and PRIM2 respectively. Within the complex, POLA1 directly interacts with PRIM2/p58. Phosphorylated in a cell cycle-dependent manner, in G2/M phase.

It localises to the nucleus. Its function is as follows. Accessory subunit of the DNA polymerase alpha complex (also known as the alpha DNA polymerase-primase complex) which plays an essential role in the initiation of DNA synthesis. During the S phase of the cell cycle, the DNA polymerase alpha complex (composed of a catalytic subunit POLA1, an accessory subunit POLA2 and two primase subunits, the catalytic subunit PRIM1 and the regulatory subunit PRIM2) is recruited to DNA at the replicative forks via direct interactions with MCM10 and WDHD1. The primase subunit of the polymerase alpha complex initiates DNA synthesis by oligomerising short RNA primers on both leading and lagging strands. These primers are initially extended by the polymerase alpha catalytic subunit and subsequently transferred to polymerase delta and polymerase epsilon for processive synthesis on the lagging and leading strand, respectively. This Homo sapiens (Human) protein is DNA polymerase alpha subunit B (POLA2).